The primary structure comprises 208 residues: Outer-membrane lipoprotein carrier protein (208 aa).

Residues 1–23 (MKKTVKNLTALLTLALAAPWALA) form the signal peptide.

The protein belongs to the LolA family. Monomer.

It is found in the periplasm. Its function is as follows. Participates in the translocation of lipoproteins from the inner membrane to the outer membrane. Only forms a complex with a lipoprotein if the residue after the N-terminal Cys is not an aspartate (The Asp acts as a targeting signal to indicate that the lipoprotein should stay in the inner membrane). In Actinobacillus succinogenes (strain ATCC 55618 / DSM 22257 / CCUG 43843 / 130Z), this protein is Outer-membrane lipoprotein carrier protein.